Reading from the N-terminus, the 484-residue chain is Chromosomal replication initiator protein DnaA (484 aa).

The domain I, interacts with DnaA modulators stretch occupies residues 1 to 83 (MQPPSQDWAS…LAWRTVWPGI (83 aa)). The tract at residues 83-146 (IAEVKVSVRN…EKKAEGEDQN (64 aa)) is domain II. Positions 110-146 (GDQPRPLPKKPAKKKQSVPATPKSTSPEKKAEGEDQN) are disordered. The segment covering 116–125 (LPKKPAKKKQ) has biased composition (basic residues). Positions 135-146 (SPEKKAEGEDQN) are enriched in basic and acidic residues. The segment at 147-364 (QFEERYNFDN…GALNRVVAYA (218 aa)) is domain III, AAA+ region. ATP-binding residues include Gly191, Gly193, Lys194, and Thr195. The interval 365-484 (TLSNRPINMD…VRLLMRQFEG (120 aa)) is domain IV, binds dsDNA.

This sequence belongs to the DnaA family. As to quaternary structure, oligomerizes as a right-handed, spiral filament on DNA at oriC.

Its subcellular location is the cytoplasm. Plays an essential role in the initiation and regulation of chromosomal replication. ATP-DnaA binds to the origin of replication (oriC) to initiate formation of the DNA replication initiation complex once per cell cycle. Binds the DnaA box (a 9 base pair repeat at the origin) and separates the double-stranded (ds)DNA. Forms a right-handed helical filament on oriC DNA; dsDNA binds to the exterior of the filament while single-stranded (ss)DNA is stabiized in the filament's interior. The ATP-DnaA-oriC complex binds and stabilizes one strand of the AT-rich DNA unwinding element (DUE), permitting loading of DNA polymerase. After initiation quickly degrades to an ADP-DnaA complex that is not apt for DNA replication. Binds acidic phospholipids. The sequence is that of Chromosomal replication initiator protein DnaA from Zymomonas mobilis subsp. mobilis (strain ATCC 31821 / ZM4 / CP4).